A 360-amino-acid chain; its full sequence is Photosystem II protein D1 (360 aa).

The next 3 helical transmembrane spans lie at 29–46 (YIGW…TATS), 118–133 (HFLL…EWEL), and 142–156 (WIFV…AASA). His-118 contributes to the chlorophyll a binding site. Tyr-126 provides a ligand contact to pheophytin a. Residues Asp-170 and Glu-189 each coordinate [CaMn4O5] cluster. Residues 197-218 (FHMAGVAGVFGGSLFSAMHGSL) form a helical membrane-spanning segment. A chlorophyll a-binding site is contributed by His-198. A quinone is bound by residues His-215 and 264-265 (SF). Position 215 (His-215) interacts with Fe cation. His-272 serves as a coordination point for Fe cation. A helical transmembrane segment spans residues 274 to 288 (FLALWPVVGIWLTAM). [CaMn4O5] cluster is bound by residues His-332, Glu-333, Asp-342, and Ala-344. Residues 345-360 (SGEVLPVALTAPAVNG) constitute a propeptide that is removed on maturation.

This sequence belongs to the reaction center PufL/M/PsbA/D family. PSII is composed of 1 copy each of membrane proteins PsbA, PsbB, PsbC, PsbD, PsbE, PsbF, PsbH, PsbI, PsbJ, PsbK, PsbL, PsbM, PsbT, PsbX, PsbY, PsbZ, Psb30/Ycf12, at least 3 peripheral proteins of the oxygen-evolving complex and a large number of cofactors. It forms dimeric complexes. The D1/D2 heterodimer binds P680, chlorophylls that are the primary electron donor of PSII, and subsequent electron acceptors. It shares a non-heme iron and each subunit binds pheophytin, quinone, additional chlorophylls, carotenoids and lipids. D1 provides most of the ligands for the Mn4-Ca-O5 cluster of the oxygen-evolving complex (OEC). There is also a Cl(-1) ion associated with D1 and D2, which is required for oxygen evolution. The PSII complex binds additional chlorophylls, carotenoids and specific lipids. is required as a cofactor. Tyr-161 forms a radical intermediate that is referred to as redox-active TyrZ, YZ or Y-Z. In terms of processing, C-terminally processed by CTPA; processing is essential to allow assembly of the oxygen-evolving complex and thus photosynthetic growth.

It is found in the plastid. The protein resides in the chloroplast thylakoid membrane. The catalysed reaction is 2 a plastoquinone + 4 hnu + 2 H2O = 2 a plastoquinol + O2. Photosystem II (PSII) is a light-driven water:plastoquinone oxidoreductase that uses light energy to abstract electrons from H(2)O, generating O(2) and a proton gradient subsequently used for ATP formation. It consists of a core antenna complex that captures photons, and an electron transfer chain that converts photonic excitation into a charge separation. The D1/D2 (PsbA/PsbD) reaction center heterodimer binds P680, the primary electron donor of PSII as well as several subsequent electron acceptors. The polypeptide is Photosystem II protein D1 (Phaeodactylum tricornutum (strain CCAP 1055/1)).